Consider the following 171-residue polypeptide: Large ribosomal subunit protein bL9 (171 aa).

It belongs to the bacterial ribosomal protein bL9 family.

Binds to the 23S rRNA. The protein is Large ribosomal subunit protein bL9 of Rickettsia canadensis (strain McKiel).